The following is a 335-amino-acid chain: Dehydration-responsive element-binding protein 2A (335 aa).

Disordered stretches follow at residues 1 to 32 and 50 to 74; these read MAVY…GTTV and STKK…GPEN. The Nuclear localization signal motif lies at 19–55; it reads RKRKSRSRGDGTTVAERLKRWKEYNETVEEVSTKKRK. Residues 52–66 show a composition bias toward basic residues; it reads KKRKVPAKGSKKGCM. A DNA-binding region (AP2/ERF) is located at residues 78 to 135; that stretch reads SFRGVRQRIWGKWVAEIREPNRGSRLWLGTFPTAQEAASAYDEAAKAMYGPLARLNFP. A disordered region spans residues 279-304; it reads QDRYPGNSVANGSYRPESQQSGFDPL. The segment covering 286-304 has biased composition (polar residues); the sequence is SVANGSYRPESQQSGFDPL.

The protein belongs to the AP2/ERF transcription factor family. ERF subfamily. As to quaternary structure, interacts with MED25. Binds to DPB3-1 in the nucleus during heat-stress. Ubiquitinated by DRIP1 and DRIP2. Ubiquitination probably leads to its subsequent degradation, thus negatively regulating response to drought. As to expression, expressed preferentially in roots and stems, and at a lower level in leaves.

The protein localises to the nucleus. Transcriptional activator that binds specifically to the DNA sequence 5'-[AG]CCGAC-3'. Binding to the C-repeat/DRE element mediates high salinity- and dehydration-inducible transcription. Promotes the expression of heat stress-inducible genes by contributing to the formation of a heat stress-specific transcriptional complex with NF-Y subunits (e.g. DPB3-1, NF-YA2 and NF-YB3) at the promoter of target genes, thus promoting heat tolerance. This chain is Dehydration-responsive element-binding protein 2A, found in Arabidopsis thaliana (Mouse-ear cress).